The following is a 356-amino-acid chain: tRNA-specific 2-thiouridylase MnmA 1 (356 aa).

Residues 8 to 15 (GMSGGVDS) and Met34 contribute to the ATP site. Residue Cys103 is the Nucleophile of the active site. Cysteines 103 and 199 form a disulfide. Gly127 contacts ATP. Residues 149–151 (KDQ) form an interaction with tRNA region. Cys199 (cysteine persulfide intermediate) is an active-site residue. The interval 305–306 (RY) is interaction with tRNA.

Belongs to the MnmA/TRMU family.

It is found in the cytoplasm. The catalysed reaction is S-sulfanyl-L-cysteinyl-[protein] + uridine(34) in tRNA + AH2 + ATP = 2-thiouridine(34) in tRNA + L-cysteinyl-[protein] + A + AMP + diphosphate + H(+). Its function is as follows. Catalyzes the 2-thiolation of uridine at the wobble position (U34) of tRNA, leading to the formation of s(2)U34. This chain is tRNA-specific 2-thiouridylase MnmA 1, found in Clostridium botulinum (strain Loch Maree / Type A3).